The following is a 205-amino-acid chain: Small ribosomal subunit protein uS4 (205 aa).

The region spanning Ser94–Ile157 is the S4 RNA-binding domain.

It belongs to the universal ribosomal protein uS4 family. As to quaternary structure, part of the 30S ribosomal subunit. Contacts protein S5. The interaction surface between S4 and S5 is involved in control of translational fidelity.

Its function is as follows. One of the primary rRNA binding proteins, it binds directly to 16S rRNA where it nucleates assembly of the body of the 30S subunit. With S5 and S12 plays an important role in translational accuracy. This is Small ribosomal subunit protein uS4 from Rickettsia canadensis (strain McKiel).